The sequence spans 334 residues: D-fructose 1,6-bisphosphatase class 2/sedoheptulose 1,7-bisphosphatase (334 aa).

The Mn(2+) site is built by D33, E57, D85, and E88. Substrate is bound by residues 88-90 (EGT), Y119, 164-166 (RAR), and 186-188 (DGD). E213 provides a ligand contact to Mn(2+).

The protein belongs to the FBPase class 2 family. As to quaternary structure, homotetramer. The cofactor is Mn(2+).

The catalysed reaction is beta-D-fructose 1,6-bisphosphate + H2O = beta-D-fructose 6-phosphate + phosphate. It carries out the reaction D-sedoheptulose 1,7-bisphosphate + H2O = D-sedoheptulose 7-phosphate + phosphate. It participates in carbohydrate biosynthesis; Calvin cycle. Catalyzes the hydrolysis of fructose 1,6-bisphosphate (Fru 1,6-P2) and sedoheptulose 1,7-bisphosphate (Sed 1,7-P2) to fructose 6-phosphate and sedoheptulose 7-phosphate, respectively. This chain is D-fructose 1,6-bisphosphatase class 2/sedoheptulose 1,7-bisphosphatase, found in Synechococcus sp. (strain CC9311).